A 201-amino-acid polypeptide reads, in one-letter code: Putative tRNA-binding protein YtpR (201 aa).

Residues V90–Q200 enclose the tRNA-binding domain.

The polypeptide is Putative tRNA-binding protein YtpR (ytpR) (Bacillus subtilis (strain 168)).